The following is a 23-amino-acid chain: Septenin 2a (23 aa).

In terms of tissue distribution, expressed in skin glands.

It is found in the secreted. May act as an antimicrobial peptide. This Osteopilus septentrionalis (Cuban treefrog) protein is Septenin 2a.